Reading from the N-terminus, the 215-residue chain is N-(5'-phosphoribosyl)anthranilate isomerase (215 aa).

Belongs to the TrpF family.

The enzyme catalyses N-(5-phospho-beta-D-ribosyl)anthranilate = 1-(2-carboxyphenylamino)-1-deoxy-D-ribulose 5-phosphate. It participates in amino-acid biosynthesis; L-tryptophan biosynthesis; L-tryptophan from chorismate: step 3/5. This is N-(5'-phosphoribosyl)anthranilate isomerase from Cellvibrio japonicus (strain Ueda107) (Pseudomonas fluorescens subsp. cellulosa).